Consider the following 336-residue polypeptide: Large ribosomal subunit protein uL1 (336 aa).

The segment at 1 to 245 (MANQKKVTNK…VKKTAKGKVI (245 aa)) is large ribosomal subunit protein uL1. Residues 246 to 336 (ADDSAKGENK…DVKKAKTSKK (91 aa)) are unknown. The segment at 267 to 336 (AQKKKPSKHP…DVKKAKTSKK (70 aa)) is disordered. Over residues 286–305 (KKKKVKKILKKAKPAKKAAV) the composition is skewed to basic residues. Positions 306 to 315 (AKKPVVVNKK) are enriched in low complexity.

Belongs to the universal ribosomal protein uL1 family. In terms of assembly, part of the 50S ribosomal subunit.

In terms of biological role, binds directly to 23S rRNA. The L1 stalk is quite mobile in the ribosome, and is involved in E site tRNA release. Its function is as follows. Protein L1 is also a translational repressor protein, it controls the translation of the L11 operon by binding to its mRNA. This chain is Large ribosomal subunit protein uL1, found in Malacoplasma penetrans (strain HF-2) (Mycoplasma penetrans).